Reading from the N-terminus, the 81-residue chain is uncharacterized protein (81 aa).

An N-terminal signal peptide occupies residues 1–31 (MRYNSFLSVLALFNVLLWFTFILAISMTFSA). The chain crosses the membrane as a helical span at residues 52-74 (WFFVLLPYVIGLFFAIFDSATIG).

The protein localises to the membrane. This is an uncharacterized protein from Pasteurella multocida (strain Pm70).